Consider the following 415-residue polypeptide: Vascular endothelial growth factor C (415 aa).

An N-terminal signal peptide occupies residues 1-31 (MHLLCFLSLACSLLAAALIPGPREAPATVAA). Positions 32–107 (FESGLGFSEA…RTGDTVKLAA (76 aa)) are excised as a propeptide. Disulfide bonds link C127–C169, C158–C205, and C162–C207. 3 N-linked (GlcNAc...) asparagine glycosylation sites follow: N171, N201, and N236. The propeptide occupies 224–415 (SLPATLPQCQ…PSYWKRPHLN (192 aa)). Tandem repeats lie at residues 276-291 (CGPNKELDEDTCQCVC), 300-315 (CGPHKELDRDSCQCVC), 324-339 (CGANREFDENTCQCVC), and 343-358 (CPRNQPLNPGKCACEC). The 4 X 16 AA repeats of C-X(10)-C-X-C-X(1,3)-C stretch occupies residues 276–358 (CGPNKELDED…LNPGKCACEC (83 aa)).

Belongs to the PDGF/VEGF growth factor family. In terms of assembly, homodimer; non-covalent and antiparallel. Interacts with FLT4/VEGFR3; the interaction is required for FLT4/VEGFR3 homodimarization and activation. Post-translationally, undergoes a complex proteolytic maturation which generates a variety of processed secreted forms with increased activity toward VEGFR-3, but only the fully processed form could activate VEGFR-2. VEGF-C first form an antiparallel homodimer linked by disulfide bonds. Before secretion, a cleavage occurs between Arg-223 and Ser-224 producing a heterotetramer. The next extracellular step of the processing removes the N-terminal propeptide. Finally the mature VEGF-C is composed mostly of two VEGF homology domains (VHDs) bound by non-covalent interactions. Highly expressed in the lung, ovary, preputial gland and the adrenal gland. Expressed in the post-pubertal mammary glands.

The protein localises to the secreted. Growth factor active in angiogenesis, and endothelial cell growth, stimulating their proliferation and migration and also has effects on the permeability of blood vessels. May function in angiogenesis of the venous and lymphatic vascular systems during embryogenesis, and also in the maintenance of differentiated lymphatic endothelium in adults. Binds and activates KDR/VEGFR2 and FLT4/VEGFR3 receptors. In Rattus norvegicus (Rat), this protein is Vascular endothelial growth factor C (Vegfc).